The chain runs to 126 residues: Tachykinin-3 (126 aa).

An N-terminal signal peptide occupies residues 1 to 20 (MRSTLLFAVILALSSARSLG). Positions 21–83 (AVCEESQEQV…VGPKESPLPQ (63 aa)) are excised as a propeptide. Position 95 is a methionine amide (Met-95). Positions 99-126 (NLQPDTPVDINQENIPSFGTFKYPPSVE) are excised as a propeptide. The segment at 102–126 (PDTPVDINQENIPSFGTFKYPPSVE) is disordered.

This sequence belongs to the tachykinin family.

It is found in the secreted. Its function is as follows. Tachykinins are active peptides which excite neurons, evoke behavioral responses, are potent vasodilators and secretagogues, and contract (directly or indirectly) many smooth muscles. Is a critical central regulator of gonadal function. The chain is Tachykinin-3 (TAC3) from Bos taurus (Bovine).